A 684-amino-acid chain; its full sequence is MPPRKRKLEELKNEQGEQGSYKCHLCGQCFYRGCGLASHLRRHAPVTFDCEHCAYTCKHKYAYDRHLLQSHPELVESGPLVRMFKNEDEDAPMPILEREADVSDDAVKYEALSSFSEPEPISYKCPLCISTFGSHARAVYHILSHRVKLYQAPKSLKFFSRKTMQALGGFRLESQLMIKWRLQYDNRSVDEKRTRLWRYMEENFGHEHLKQPKLESDNPSTSSSFESQTNLNDSSIIKKKLVMKCGTVFGQRLIHDNTQYYLCRNCPYVSWNVSSLWRHFRHHIQKSKQSWTCIACSYSSSSRVKIDLHVKMHKEMPEIDLEFATWLRYERRINKNDLNKPTNKKKKPDGGNGSNHSDMRSLHAFLSLKNSKNNVVKHDIDAPTLHPLSPAPKLVAMTQFDFGEIVTYKSVNPLHQINKNNSNPTVLPNKRNSIKTSKSDTQIALSVKQSSSMKMVKVSPGKVYQLPKTSKFYRPESPDSLASNNSAHGDEIESTSSDQFQQSVKVPKYEDFLNMKPVMPYFQKQRHPLEAIAMYEKAKREYEKNHCFPNLPIFEFNIEYKNLHPLAKAQYGKNNMKEYFLNEMEVEKSRECTDCPFKHNDLQQFRLHRDKHFYGGSHTCPECNYSSNNHNQVVEHTFVDHYLSDVRLVEGLPSSDSEDDNIPVPPDTPQRKKKAPKRGKRRGW.

5 consecutive C2H2-type zinc fingers follow at residues 21–43 (YKCHLCGQCFYRGCGLASHLRRH), 48–71 (FDCEHCAYTCKHKYAYDRHLLQSH), 123–145 (YKCPLCISTFGSHARAVYHILSH), 261–283 (YLCRNCPYVSWNVSSLWRHFRHH), and 291–313 (WTCIACSYSSSSRVKIDLHVKMH). Disordered regions lie at residues 337 to 359 (DLNKPTNKKKKPDGGNGSNHSDM), 419 to 440 (KNNSNPTVLPNKRNSIKTSKSD), and 469 to 501 (TSKFYRPESPDSLASNNSAHGDEIESTSSDQFQ). 2 consecutive C2H2-type zinc fingers follow at residues 590–612 (RECTDCPFKHNDLQQFRLHRDKH) and 618–641 (HTCPECNYSSNNHNQVVEHTFVDH). Residues 652 to 684 (LPSSDSEDDNIPVPPDTPQRKKKAPKRGKRRGW) are disordered. The segment covering 671–684 (RKKKAPKRGKRRGW) has biased composition (basic residues).

The protein localises to the nucleus. In terms of biological role, probable transcriptional regulator, which participates in the transcriptional repression of the presenilin protein hop-1. This is Suppressor of presenilin protein 3 (spr-3) from Caenorhabditis elegans.